Reading from the N-terminus, the 479-residue chain is Transcriptional regulator ERG (479 aa).

Residues 34-47 (TASSSSDYGQTSKM) show a composition bias toward polar residues. Disordered regions lie at residues 34–56 (TASSSSDYGQTSKMSPRVPQQDW) and 72–92 (PSQVNGSRNSPDECSVAKGGK). Ser-48, Ser-81, and Ser-96 each carry phosphoserine. A PNT domain is found at 113–199 (MPPPNMTTNE…SHLHYLRETP (87 aa)). The segment at 242–293 (QRITTRPDLPYEPPRRSAWTGHGHPTPQSKAAQPSPSTVPKTEDQRPQLDPY) is disordered. The segment covering 267–281 (TPQSKAAQPSPSTVP) has biased composition (polar residues). Residue Lys-282 forms a Glycyl lysine isopeptide (Lys-Gly) (interchain with G-Cter in SUMO2) linkage. A DNA-binding region (ETS) is located at residues 311–391 (IQLWQFLLEL…HGKRYAYKFD (81 aa)).

This sequence belongs to the ETS family. Identified in a IGF2BP1-dependent mRNP granule complex containing untranslated mRNAs. Interacts with SETDB1.

Its subcellular location is the nucleus. The protein resides in the cytoplasm. In terms of biological role, transcriptional regulator. May participate in transcriptional regulation through the recruitment of SETDB1 histone methyltransferase and subsequent modification of local chromatin structure. The protein is Transcriptional regulator ERG (ERG) of Homo sapiens (Human).